We begin with the raw amino-acid sequence, 418 residues long: MNIFEELKARGLVFQTTDEEALVKALTEGQVSYYTGYDPTADSLHLGHLVAILTSRRLQLAGHKPYALVGGATGLIGDPSFKDAERSLQTKDTVDGWVTKIQGQLSRFLDFENGDNKAEMVNNYDWFSDISFIDFLRDVGKYYTVNYMMSKDSVKKRIETGISYTEFAYQIMQGYDFYELNDKHNVTLQIGGSDQWGNMTAGTELLRRKADKSGHVMTVPLITDSTGKKFGKSEGNAVWLDADKTSPYEMYQFWLNVMDDDAVRFLKIFTFLSLDEIAEIEKQFDAARHERLAQKILAKEVVTLVHGEEAYNQALNITEQLFAGNIKNLSAKELKQGLSNVPNYAVQAEDNLNIVELLVTSGIVNSKRQAREDVQNGAIYVNGERVQDLDYTLSDSDKIDGELTVIRRGKKKYSVLTY.

Y34 lines the L-tyrosine pocket. The 'HIGH' region motif lies at 39-48 (PTADSLHLGH). Residues Y169 and Q173 each coordinate L-tyrosine. The short motif at 229–233 (KFGKS) is the 'KMSKS' region element. Residue K232 participates in ATP binding. The S4 RNA-binding domain occupies 352 to 410 (LNIVELLVTSGIVNSKRQAREDVQNGAIYVNGERVQDLDYTLSDSDKIDGELTVIRRGK).

Belongs to the class-I aminoacyl-tRNA synthetase family. TyrS type 1 subfamily. In terms of assembly, homodimer.

It localises to the cytoplasm. The enzyme catalyses tRNA(Tyr) + L-tyrosine + ATP = L-tyrosyl-tRNA(Tyr) + AMP + diphosphate + H(+). Its function is as follows. Catalyzes the attachment of tyrosine to tRNA(Tyr) in a two-step reaction: tyrosine is first activated by ATP to form Tyr-AMP and then transferred to the acceptor end of tRNA(Tyr). This chain is Tyrosine--tRNA ligase, found in Streptococcus suis (strain 98HAH33).